Consider the following 548-residue polypeptide: Chaperonin GroEL (548 aa).

ATP contacts are provided by residues 29–32, 86–90, Gly-413, 476–478, and Asp-492; these read TLGP, DGTTT, and NAL. Residues 522–531 are compositionally biased toward acidic residues; that stretch reads PDEDDNDDGD. A disordered region spans residues 522–548; it reads PDEDDNDDGDMGGGAPGMGGMGGMPGM. Positions 532-548 are enriched in gly residues; that stretch reads MGGGAPGMGGMGGMPGM.

The protein belongs to the chaperonin (HSP60) family. As to quaternary structure, forms a cylinder of 14 subunits composed of two heptameric rings stacked back-to-back. Interacts with the co-chaperonin GroES.

The protein resides in the cytoplasm. It carries out the reaction ATP + H2O + a folded polypeptide = ADP + phosphate + an unfolded polypeptide.. Together with its co-chaperonin GroES, plays an essential role in assisting protein folding. The GroEL-GroES system forms a nano-cage that allows encapsulation of the non-native substrate proteins and provides a physical environment optimized to promote and accelerate protein folding. In Natranaerobius thermophilus (strain ATCC BAA-1301 / DSM 18059 / JW/NM-WN-LF), this protein is Chaperonin GroEL.